Consider the following 147-residue polypeptide: Large ribosomal subunit protein uL11 (147 aa).

Belongs to the universal ribosomal protein uL11 family. In terms of assembly, part of the ribosomal stalk of the 50S ribosomal subunit. Interacts with L10 and the large rRNA to form the base of the stalk. L10 forms an elongated spine to which L12 dimers bind in a sequential fashion forming a multimeric L10(L12)X complex. One or more lysine residues are methylated.

Functionally, forms part of the ribosomal stalk which helps the ribosome interact with GTP-bound translation factors. In Metamycoplasma arthritidis (strain 158L3-1) (Mycoplasma arthritidis), this protein is Large ribosomal subunit protein uL11.